Reading from the N-terminus, the 170-residue chain is RxLR effector protein PITG_07555 (170 aa).

Residues 1 to 17 (MQAYHLLLVCMYISCSA) form the signal peptide. A RxLR-dEER motif is present at residues 50-62 (RALRTHNPDREER).

Belongs to the RxLR effector family.

Its subcellular location is the secreted. The protein localises to the host cytoplasm. The protein resides in the host nucleus. Effector that enhances P.infestans colonization of Nicotiana benthamiana leaves. This Phytophthora infestans (strain T30-4) (Potato late blight agent) protein is RxLR effector protein PITG_07555.